Consider the following 779-residue polypeptide: Membrane metallo-endopeptidase-like 1 (779 aa).

The Cytoplasmic portion of the chain corresponds to 1–27; sequence MGKSEGPVGMVESAGRAGQKRPGFLEG. A helical; Signal-anchor for type II membrane protein transmembrane segment spans residues 28 to 48; sequence GLLLLLLLVTAALVALGVLYA. The Lumenal portion of the chain corresponds to 49-779; sequence DRRGKQLPRL…MHPKERCRVW (731 aa). Residues 88–779 enclose the Peptidase M13 domain; sequence VCTTPGCVIA…MHPKERCRVW (692 aa). 5 disulfide bridges follow: Cys-89/Cys-94, Cys-112/Cys-764, Cys-120/Cys-724, Cys-175/Cys-439, and Cys-650/Cys-776. Arg-135 provides a ligand contact to a peptide. 4 N-linked (GlcNAc...) asparagine glycosylation sites follow: Asn-177, Asn-207, Asn-350, and Asn-530. Residues 515–560 are a coiled coil; that stretch reads LEEMNRRLDEEYSNLNFSEDLYFENSLQNLKVGAQRSLRKLREKVD. His-613 is a binding site for Zn(2+). Residue Glu-614 is part of the active site. His-617 contacts Zn(2+). An N-linked (GlcNAc...) asparagine glycan is attached at Asn-657. Zn(2+) is bound at residue Glu-676. Asp-680 serves as the catalytic Proton donor.

It belongs to the peptidase M13 family. Zn(2+) serves as cofactor. Post-translationally, N-glycosylated. Predominantly expressed in testis. Weakly expressed in brain, kidney and heart.

The protein resides in the membrane. The protein localises to the secreted. It catalyses the reaction Preferential cleavage of polypeptides between hydrophobic residues, particularly with Phe or Tyr at P1'.. Its activity is regulated as follows. Inhibited by thiorphan and phosphoramidon. Metalloprotease involved in sperm function, possibly by modulating the processes of fertilization and early embryonic development. Degrades a broad variety of small peptides with a preference for peptides shorter than 3 kDa containing neutral bulky aliphatic or aromatic amino acid residues. Shares the same substrate specificity with MME and cleaves peptides at the same amide bond. The sequence is that of Membrane metallo-endopeptidase-like 1 (MMEL1) from Homo sapiens (Human).